A 44-amino-acid polypeptide reads, in one-letter code: Photosystem I reaction center subunit IX (44 aa).

A helical transmembrane segment spans residues 7–27; it reads YLSVAPVLTTLWFGSLAGLLI.

It belongs to the PsaJ family.

The protein resides in the plastid. Its subcellular location is the chloroplast thylakoid membrane. May help in the organization of the PsaE and PsaF subunits. This Drimys granadensis protein is Photosystem I reaction center subunit IX.